The chain runs to 60 residues: Ribosome biogenesis protein Nop10 (60 aa).

It belongs to the NOP10 family.

Its function is as follows. Involved in ribosome biogenesis; more specifically in 18S rRNA pseudouridylation and in cleavage of pre-rRNA. This Haloquadratum walsbyi (strain DSM 16790 / HBSQ001) protein is Ribosome biogenesis protein Nop10.